Here is a 112-residue protein sequence, read N- to C-terminus: Thioredoxin-like protein YdfQ (112 aa).

Residues 1–107 (MKEMTGLHSL…LEQKLKRVYR (107 aa)) enclose the Thioredoxin domain. An intrachain disulfide couples Cys-32 to Cys-35.

The chain is Thioredoxin-like protein YdfQ (ydfQ) from Bacillus subtilis (strain 168).